The sequence spans 1492 residues: Condensin-2 complex subunit D3-L (1492 aa).

Residues 152–201 (WPRDPNASRKRKKDTLKSSQGDNRGGRKRPRPPRRDEQEMEDLSEEEQDE) form a disordered region. Positions 189-201 (QEMEDLSEEEQDE) are enriched in acidic residues. HEAT repeat units lie at residues 543 to 581 (SSDG…CHLI), 583 to 619 (CSSE…AQPH), and 621 to 659 (VLIQ…QSIT). Disordered stretches follow at residues 1269-1345 (QLER…PRPR), 1359-1406 (RKAA…SLVG), and 1454-1492 (IMSP…KPSN). Residues 1277–1290 (NVQNPPSAESTGSP) are compositionally biased toward polar residues. Low complexity predominate over residues 1377–1388 (PSTPSPARTTSS).

Component of the condensin-2 complex, which contains the smc2 and smc4 heterodimer, and three non SMC subunits, ncapg2, ncaph2 and ncapd3 that probably regulate the complex.

The protein localises to the nucleus. Regulatory subunit of the condensin-2 complex, a complex which establishes mitotic chromosome architecture and is involved in physical rigidity of the chromatid axis. The sequence is that of Condensin-2 complex subunit D3-L from Xenopus laevis (African clawed frog).